A 204-amino-acid polypeptide reads, in one-letter code: Cytochrome P450 monooxygenase PC-23 (204 aa).

C138 lines the heme pocket.

This sequence belongs to the cytochrome P450 family. Requires heme as cofactor.

It functions in the pathway secondary metabolite biosynthesis. Functionally, cytochrome P450 monooxygenase; part of the gene cluster that mediates the biosynthesis of the indole diterpenes penitrems. The geranylgeranyl diphosphate (GGPP) synthase penG catalyzes the first step in penitrem biosynthesis via conversion of farnesyl pyrophosphate and isopentyl pyrophosphate into geranylgeranyl pyrophosphate (GGPP). Condensation of indole-3-glycerol phosphate with GGPP by the prenyl transferase penC then forms 3-geranylgeranylindole (3-GGI). Epoxidation by the FAD-dependent monooxygenase penM leads to a epoxidized-GGI that is substrate of the terpene cyclase penB for cyclization to yield paspaline. Paspaline is subsequently converted to 13-desoxypaxilline by the cytochrome P450 monooxygenase penP, the latter being then converted to paxilline by the cytochrome P450 monooxygenase penQ. Paxilline is converted to beta-paxitriol via C-10 ketoreduction by the short-chain dehydrogenase PC-15 which can be monoprenylated at the C-20 by the indole diterpene prenyltransferase penD. A two-step elimination (acetylation and elimination) process performed by the O-acetyltransferase PC-16 and the P.simplicissimum ptmI-ortholog not yet identified in P.crustosum, leads to the production of the prenylated form of penijanthine. The FAD-linked oxidoreductase ptmO then converts the prenylated form of penijanthine into PC-M5 which is in turn transformed into PC-M4 by the aromatic dimethylallyltransferase PC-22. A series of oxidation steps involving 4 cytochrome P450 monooxygenases (PC-21, PC-05, PC-23, PC-20) and a FAD-dependent monooxygenase (PC-14) are required for the transformation of PC-M4 to penitrems A and E. Synthesis of these final products is proposed to proceed via penitrems D and C (PC-21, PC-05, PC-14) and penitrems B and F (PC-21, PC-05, PC-14, PC-23). This is Cytochrome P450 monooxygenase PC-23 from Penicillium crustosum (Blue mold fungus).